We begin with the raw amino-acid sequence, 234 residues long: Phosphoribosylaminoimidazole-succinocarboxamide synthase (234 aa).

The protein belongs to the SAICAR synthetase family.

The enzyme catalyses 5-amino-1-(5-phospho-D-ribosyl)imidazole-4-carboxylate + L-aspartate + ATP = (2S)-2-[5-amino-1-(5-phospho-beta-D-ribosyl)imidazole-4-carboxamido]succinate + ADP + phosphate + 2 H(+). It participates in purine metabolism; IMP biosynthesis via de novo pathway; 5-amino-1-(5-phospho-D-ribosyl)imidazole-4-carboxamide from 5-amino-1-(5-phospho-D-ribosyl)imidazole-4-carboxylate: step 1/2. The sequence is that of Phosphoribosylaminoimidazole-succinocarboxamide synthase from Streptococcus pyogenes serotype M1.